We begin with the raw amino-acid sequence, 239 residues long: DnaA regulatory inactivator Hda (239 aa).

It belongs to the DnaA family. HdA subfamily. In terms of assembly, the active form seems to be an ADP-bound monomer. Forms the RIDA complex (regulatory inactivation of DnaA) of ATP-DnaA, ADP-Hda and the DNA-loaded beta sliding clamp (dnaN).

In terms of biological role, mediates the interaction of DNA replication initiator protein DnaA with DNA polymerase subunit beta sliding clamp (dnaN). Stimulates hydrolysis of ATP-DnaA to ADP-DnaA, rendering DnaA inactive for reinitiation, a process called regulatory inhibition of DnaA or RIDA. This is DnaA regulatory inactivator Hda from Yersinia pseudotuberculosis serotype O:1b (strain IP 31758).